The chain runs to 559 residues: Formate--tetrahydrofolate ligase (559 aa).

66 to 73 (TPPGEGKT) lines the ATP pocket.

The protein belongs to the formate--tetrahydrofolate ligase family.

It catalyses the reaction (6S)-5,6,7,8-tetrahydrofolate + formate + ATP = (6R)-10-formyltetrahydrofolate + ADP + phosphate. The protein operates within one-carbon metabolism; tetrahydrofolate interconversion. In Nocardioides sp. (strain ATCC BAA-499 / JS614), this protein is Formate--tetrahydrofolate ligase.